We begin with the raw amino-acid sequence, 556 residues long: Formate--tetrahydrofolate ligase (556 aa).

Residue 64–71 (TPAGEGKT) coordinates ATP.

The protein belongs to the formate--tetrahydrofolate ligase family.

It carries out the reaction (6S)-5,6,7,8-tetrahydrofolate + formate + ATP = (6R)-10-formyltetrahydrofolate + ADP + phosphate. The protein operates within one-carbon metabolism; tetrahydrofolate interconversion. This Actinobacillus pleuropneumoniae serotype 5b (strain L20) protein is Formate--tetrahydrofolate ligase.